Consider the following 157-residue polypeptide: Probable succinate transporter subunit YjjB (157 aa).

4 helical membrane-spanning segments follow: residues 8 to 28 (FALA…AMVF), 50 to 70 (MILM…SMLV), 87 to 107 (VFTV…TAMI), and 129 to 149 (FLTA…PGLW).

This sequence belongs to the ThrE exporter (TC 2.A.79) family. In terms of assembly, the transporter is composed of YjjB and YjjP.

It localises to the cell inner membrane. Functionally, involved in succinate export with YjjP. Both proteins are required for export. In Escherichia coli (strain ATCC 8739 / DSM 1576 / NBRC 3972 / NCIMB 8545 / WDCM 00012 / Crooks), this protein is Probable succinate transporter subunit YjjB.